A 393-amino-acid polypeptide reads, in one-letter code: Dual-specificity RNA methyltransferase RlmN (393 aa).

The active-site Proton acceptor is glutamate 114. Residues 120–359 form the Radical SAM core domain; it reads EGDRATLCVS…VIVRKTRGDD (240 aa). A disulfide bridge connects residues cysteine 127 and cysteine 364. Residues cysteine 134, cysteine 138, and cysteine 141 each contribute to the [4Fe-4S] cluster site. Residues 188–189, serine 220, 242–244, and asparagine 321 each bind S-adenosyl-L-methionine; these read GE and SLH. Cysteine 364 (S-methylcysteine intermediate) is an active-site residue.

Belongs to the radical SAM superfamily. RlmN family. The cofactor is [4Fe-4S] cluster.

Its subcellular location is the cytoplasm. The enzyme catalyses adenosine(2503) in 23S rRNA + 2 reduced [2Fe-2S]-[ferredoxin] + 2 S-adenosyl-L-methionine = 2-methyladenosine(2503) in 23S rRNA + 5'-deoxyadenosine + L-methionine + 2 oxidized [2Fe-2S]-[ferredoxin] + S-adenosyl-L-homocysteine. The catalysed reaction is adenosine(37) in tRNA + 2 reduced [2Fe-2S]-[ferredoxin] + 2 S-adenosyl-L-methionine = 2-methyladenosine(37) in tRNA + 5'-deoxyadenosine + L-methionine + 2 oxidized [2Fe-2S]-[ferredoxin] + S-adenosyl-L-homocysteine. Its function is as follows. Specifically methylates position 2 of adenine 2503 in 23S rRNA and position 2 of adenine 37 in tRNAs. m2A2503 modification seems to play a crucial role in the proofreading step occurring at the peptidyl transferase center and thus would serve to optimize ribosomal fidelity. The polypeptide is Dual-specificity RNA methyltransferase RlmN (Haemophilus ducreyi (strain 35000HP / ATCC 700724)).